The sequence spans 530 residues: Light-independent protochlorophyllide reductase subunit B (530 aa).

Asp36 is a [4Fe-4S] cluster binding site. Asp290 (proton donor) is an active-site residue. 425 to 426 (GL) lines the substrate pocket. Positions 448 to 483 (LGHLGGHASETKTSSKGINQSPNNHSPAGESIHWTS) are disordered. The segment covering 458–473 (TKTSSKGINQSPNNHS) has biased composition (polar residues).

The protein belongs to the ChlB/BchB/BchZ family. In terms of assembly, protochlorophyllide reductase is composed of three subunits; ChlL, ChlN and ChlB. Forms a heterotetramer of two ChlB and two ChlN subunits. The cofactor is [4Fe-4S] cluster.

It catalyses the reaction chlorophyllide a + oxidized 2[4Fe-4S]-[ferredoxin] + 2 ADP + 2 phosphate = protochlorophyllide a + reduced 2[4Fe-4S]-[ferredoxin] + 2 ATP + 2 H2O. The protein operates within porphyrin-containing compound metabolism; chlorophyll biosynthesis (light-independent). Component of the dark-operative protochlorophyllide reductase (DPOR) that uses Mg-ATP and reduced ferredoxin to reduce ring D of protochlorophyllide (Pchlide) to form chlorophyllide a (Chlide). This reaction is light-independent. The NB-protein (ChlN-ChlB) is the catalytic component of the complex. This Prochlorococcus marinus (strain SARG / CCMP1375 / SS120) protein is Light-independent protochlorophyllide reductase subunit B.